Reading from the N-terminus, the 935-residue chain is Phosphoenolpyruvate carboxylase (935 aa).

Active-site residues include His-161 and Lys-593.

This sequence belongs to the PEPCase type 1 family. The cofactor is Mg(2+).

It carries out the reaction oxaloacetate + phosphate = phosphoenolpyruvate + hydrogencarbonate. Forms oxaloacetate, a four-carbon dicarboxylic acid source for the tricarboxylic acid cycle. This chain is Phosphoenolpyruvate carboxylase, found in Mycolicibacterium paratuberculosis (strain ATCC BAA-968 / K-10) (Mycobacterium paratuberculosis).